We begin with the raw amino-acid sequence, 442 residues long: Trigger factor (442 aa).

The region spanning 162-247 (GDRMTFDFEG…VKAIESRELP (86 aa)) is the PPIase FKBP-type domain.

This sequence belongs to the FKBP-type PPIase family. Tig subfamily.

The protein localises to the cytoplasm. The catalysed reaction is [protein]-peptidylproline (omega=180) = [protein]-peptidylproline (omega=0). In terms of biological role, involved in protein export. Acts as a chaperone by maintaining the newly synthesized protein in an open conformation. Functions as a peptidyl-prolyl cis-trans isomerase. This chain is Trigger factor, found in Magnetococcus marinus (strain ATCC BAA-1437 / JCM 17883 / MC-1).